Consider the following 196-residue polypeptide: MRPKVVFVLGGPGAGKGTQCARIVEKYGYTHLSAGELLRDERKNPDSQYGELIEKYIKDGKIVPVEITISLLRREMDQTMAANAQKNKFLIDGFPRNQDNLQGWNKTMDGKADVSFVLFFDCNNEICIERCLERGKSSGRSDDNRESLEKRIQTYLQSTKPIIDLYEEMGKVKKIDASKSVDEVFDEVVKIFDKEG.

ATP is bound at residue 13-18 (GAGKGT). Phosphoserine is present on S33. The interval 33–63 (SAGELLRDERKNPDSQYGELIEKYIKDGKIV) is NMP. R39 serves as a coordination point for a ribonucleoside 5'-phosphate. Residues K43 and K55 each carry the N6-acetyllysine modification. Residues 61–63 (KIV) and 93–96 (GFPR) contribute to the a ribonucleoside 5'-phosphate site. N100 contacts CMP. K106 bears the N6-succinyllysine mark. The tract at residues 133–143 (ERGKSSGRSDD) is LID. An ATP-binding site is contributed by R134. 2 residues coordinate a ribonucleoside 5'-phosphate: R140 and R151. K179 serves as a coordination point for ATP. The residue at position 180 (S180) is a Phosphoserine.

This sequence belongs to the adenylate kinase family. UMP-CMP kinase subfamily. Monomer. Mg(2+) is required as a cofactor.

It is found in the nucleus. The protein resides in the cytoplasm. The enzyme catalyses CMP + ATP = CDP + ADP. It catalyses the reaction dCMP + ATP = dCDP + ADP. It carries out the reaction UMP + ATP = UDP + ADP. The catalysed reaction is a 2'-deoxyribonucleoside 5'-diphosphate + ATP = a 2'-deoxyribonucleoside 5'-triphosphate + ADP. The enzyme catalyses a ribonucleoside 5'-diphosphate + ATP = a ribonucleoside 5'-triphosphate + ADP. In terms of biological role, catalyzes the phosphorylation of pyrimidine nucleoside monophosphates at the expense of ATP. Plays an important role in de novo pyrimidine nucleotide biosynthesis. Has preference for UMP and CMP as phosphate acceptors. Also displays broad nucleoside diphosphate kinase activity. This Sus scrofa (Pig) protein is UMP-CMP kinase.